The chain runs to 99 residues: Plastocyanin (99 aa).

A Plastocyanin-like domain is found at 1-99 (VEVLLGASDG…AGMVGQVTVN (99 aa)). Residues histidine 37, cysteine 84, histidine 87, and methionine 92 each contribute to the Cu cation site.

Belongs to the plastocyanin family. Requires Cu(2+) as cofactor.

It is found in the plastid. The protein localises to the chloroplast thylakoid membrane. In terms of biological role, participates in electron transfer between P700 and the cytochrome b6-f complex in photosystem I. This is Plastocyanin (PETE) from Vicia faba (Broad bean).